Here is a 204-residue protein sequence, read N- to C-terminus: RNA-free ribonuclease P (204 aa).

The protein belongs to the HARP family.

It carries out the reaction Endonucleolytic cleavage of RNA, removing 5'-extranucleotides from tRNA precursor.. RNA-free RNase P that catalyzes the removal of the 5'-leader sequence from pre-tRNA to produce the mature 5'-terminus. The protein is RNA-free ribonuclease P of Pyrococcus horikoshii (strain ATCC 700860 / DSM 12428 / JCM 9974 / NBRC 100139 / OT-3).